The sequence spans 617 residues: Chaperone protein HscA homolog (617 aa).

It belongs to the heat shock protein 70 family.

Chaperone involved in the maturation of iron-sulfur cluster-containing proteins. Has a low intrinsic ATPase activity which is markedly stimulated by HscB. This is Chaperone protein HscA homolog from Photobacterium profundum (strain SS9).